The following is a 369-amino-acid chain: Quinolinate synthase (369 aa).

Iminosuccinate contacts are provided by His-47 and Ser-64. Cys-111 contributes to the [4Fe-4S] cluster binding site. Iminosuccinate is bound by residues 142 to 144 (YVN) and Ser-163. Cys-231 is a [4Fe-4S] cluster binding site. Iminosuccinate is bound by residues 257–259 (HPE) and Thr-274. Cys-321 lines the [4Fe-4S] cluster pocket.

Belongs to the quinolinate synthase family. Type 3 subfamily. The cofactor is [4Fe-4S] cluster.

The protein resides in the cytoplasm. It catalyses the reaction iminosuccinate + dihydroxyacetone phosphate = quinolinate + phosphate + 2 H2O + H(+). Its pathway is cofactor biosynthesis; NAD(+) biosynthesis; quinolinate from iminoaspartate: step 1/1. Catalyzes the condensation of iminoaspartate with dihydroxyacetone phosphate to form quinolinate. The polypeptide is Quinolinate synthase (Bacillus licheniformis (strain ATCC 14580 / DSM 13 / JCM 2505 / CCUG 7422 / NBRC 12200 / NCIMB 9375 / NCTC 10341 / NRRL NRS-1264 / Gibson 46)).